The primary structure comprises 602 residues: Arginine--tRNA ligase (602 aa).

The 'HIGH' region motif lies at 138-148 (ANPTGPMHVGH).

The protein belongs to the class-I aminoacyl-tRNA synthetase family. Monomer.

It localises to the cytoplasm. The enzyme catalyses tRNA(Arg) + L-arginine + ATP = L-arginyl-tRNA(Arg) + AMP + diphosphate. In Gluconobacter oxydans (strain 621H) (Gluconobacter suboxydans), this protein is Arginine--tRNA ligase.